Reading from the N-terminus, the 500-residue chain is Probable cytosol aminopeptidase (500 aa).

Mn(2+)-binding residues include Lys-264 and Asp-269. Lys-276 is a catalytic residue. 3 residues coordinate Mn(2+): Asp-287, Asp-346, and Glu-348. Arg-350 is an active-site residue.

The protein belongs to the peptidase M17 family. It depends on Mn(2+) as a cofactor.

It localises to the cytoplasm. It carries out the reaction Release of an N-terminal amino acid, Xaa-|-Yaa-, in which Xaa is preferably Leu, but may be other amino acids including Pro although not Arg or Lys, and Yaa may be Pro. Amino acid amides and methyl esters are also readily hydrolyzed, but rates on arylamides are exceedingly low.. It catalyses the reaction Release of an N-terminal amino acid, preferentially leucine, but not glutamic or aspartic acids.. Its function is as follows. Presumably involved in the processing and regular turnover of intracellular proteins. Catalyzes the removal of unsubstituted N-terminal amino acids from various peptides. This is Probable cytosol aminopeptidase from Nitrobacter hamburgensis (strain DSM 10229 / NCIMB 13809 / X14).